The following is a 280-amino-acid chain: Shikimate dehydrogenase (NADP(+)) (280 aa).

Shikimate contacts are provided by residues 18–20 (SRS) and T65. K69 serves as the catalytic Proton acceptor. 2 residues coordinate shikimate: N90 and D105. Residues 131-135 (GAGGA), 154-159 (NRTRAR), and I219 each bind NADP(+). Residue Y221 coordinates shikimate. Residue G242 participates in NADP(+) binding.

The protein belongs to the shikimate dehydrogenase family. Homodimer.

It carries out the reaction shikimate + NADP(+) = 3-dehydroshikimate + NADPH + H(+). It participates in metabolic intermediate biosynthesis; chorismate biosynthesis; chorismate from D-erythrose 4-phosphate and phosphoenolpyruvate: step 4/7. Its function is as follows. Involved in the biosynthesis of the chorismate, which leads to the biosynthesis of aromatic amino acids. Catalyzes the reversible NADPH linked reduction of 3-dehydroshikimate (DHSA) to yield shikimate (SA). The protein is Shikimate dehydrogenase (NADP(+)) of Methylocella silvestris (strain DSM 15510 / CIP 108128 / LMG 27833 / NCIMB 13906 / BL2).